Here is a 292-residue protein sequence, read N- to C-terminus: Ribonuclease HIII (292 aa).

One can recognise an RNase H type-2 domain in the interval Thr76 to Leu292. 3 residues coordinate a divalent metal cation: Asp82, Glu83, and Asp186.

It belongs to the RNase HII family. RnhC subfamily. It depends on Mn(2+) as a cofactor. The cofactor is Mg(2+).

It is found in the cytoplasm. It carries out the reaction Endonucleolytic cleavage to 5'-phosphomonoester.. Endonuclease that specifically degrades the RNA of RNA-DNA hybrids. This chain is Ribonuclease HIII, found in Lactococcus lactis subsp. cremoris (strain SK11).